Reading from the N-terminus, the 552-residue chain is Putative transport protein APJL_0985 (552 aa).

5 consecutive transmembrane segments (helical) span residues 4-24 (IAII…IGHI), 29-49 (VGLG…CTHL), 65-85 (FGLI…FFAS), 95-115 (GFAV…HKLF), and 161-181 (IAYP…RIIF). RCK C-terminal domains lie at 190–275 (QEFD…ILGE) and 277–360 (ADVS…IIGD). 6 consecutive transmembrane segments (helical) span residues 370–390 (MLPI…PLYL), 403–425 (GGPL…YWFM), 438–458 (IVLF…DTLL), 463–483 (LAWM…TGFV), 492–512 (YLSL…LAFA), and 529–549 (VYPL…ILLW).

The protein belongs to the AAE transporter (TC 2.A.81) family. YidE subfamily.

Its subcellular location is the cell membrane. In Actinobacillus pleuropneumoniae serotype 3 (strain JL03), this protein is Putative transport protein APJL_0985.